We begin with the raw amino-acid sequence, 474 residues long: UDP-N-acetylmuramate--L-alanine ligase (474 aa).

116-122 (GTHGKTT) contacts ATP.

The protein belongs to the MurCDEF family.

It is found in the cytoplasm. The enzyme catalyses UDP-N-acetyl-alpha-D-muramate + L-alanine + ATP = UDP-N-acetyl-alpha-D-muramoyl-L-alanine + ADP + phosphate + H(+). The protein operates within cell wall biogenesis; peptidoglycan biosynthesis. Functionally, cell wall formation. This chain is UDP-N-acetylmuramate--L-alanine ligase, found in Hyphomonas neptunium (strain ATCC 15444).